Consider the following 403-residue polypeptide: Metacaspase-7 (403 aa).

Residues His-86 and Cys-139 contribute to the active site. Position 139 is an S-nitrosocysteine (Cys-139).

The protein belongs to the peptidase C14B family. In terms of processing, proteolytically processed; by an autocatalytic mechanism. In terms of tissue distribution, expressed in roots, flowers and siliques.

This Arabidopsis thaliana (Mouse-ear cress) protein is Metacaspase-7 (AMC7).